A 666-amino-acid polypeptide reads, in one-letter code: Chaperone protein dnaK1 (666 aa).

At threonine 198 the chain carries Phosphothreonine; by autocatalysis.

It belongs to the heat shock protein 70 family.

In terms of biological role, acts as a chaperone. The protein is Chaperone protein dnaK1 (dnaK1) of Prochlorococcus marinus (strain SARG / CCMP1375 / SS120).